We begin with the raw amino-acid sequence, 322 residues long: Putative nickel/cobalt efflux system HI_1248 (322 aa).

A run of 6 helical transmembrane segments spans residues 7–27, 54–74, 100–120, 137–157, 228–248, and 294–314; these read GLVLLVIALALLVYFSPWFFL, AGTTLIFASFVYGVLHALGPG, LSSLMQGIVAITATTLLVVVL, TALLLLVFLGCYWIWQGLRAY, IFVLFLAYMLDLYSWGILAVL, and LIAGGIMLFFALSLLYGTTIS.

Belongs to the NiCoT transporter (TC 2.A.52) family.

The protein resides in the cell membrane. In terms of biological role, efflux system for nickel and cobalt. This Haemophilus influenzae (strain ATCC 51907 / DSM 11121 / KW20 / Rd) protein is Putative nickel/cobalt efflux system HI_1248.